A 148-amino-acid polypeptide reads, in one-letter code: Putative nickel-responsive regulator (148 aa).

Ni(2+) contacts are provided by histidine 88, histidine 99, histidine 101, and cysteine 107.

Belongs to the transcriptional regulatory CopG/NikR family. In terms of assembly, homotetramer. Ni(2+) is required as a cofactor.

Its function is as follows. Transcriptional regulator. The protein is Putative nickel-responsive regulator of Helicobacter pylori (strain J99 / ATCC 700824) (Campylobacter pylori J99).